Here is a 194-residue protein sequence, read N- to C-terminus: Phosphoheptose isomerase (194 aa).

One can recognise an SIS domain in the interval 37–194 (ISNSFKQGGK…LIEFEMAKQA (158 aa)). 52 to 54 (NGG) contributes to the substrate binding site. The Zn(2+) site is built by histidine 61 and glutamate 65. Residues glutamate 65, 93–94 (ND), 119–121 (STS), serine 124, and glutamine 172 contribute to the substrate site. Residues glutamine 172 and histidine 180 each contribute to the Zn(2+) site.

The protein belongs to the SIS family. GmhA subfamily. In terms of assembly, homotetramer. Zn(2+) serves as cofactor.

It is found in the cytoplasm. The catalysed reaction is 2 D-sedoheptulose 7-phosphate = D-glycero-alpha-D-manno-heptose 7-phosphate + D-glycero-beta-D-manno-heptose 7-phosphate. It functions in the pathway carbohydrate biosynthesis; D-glycero-D-manno-heptose 7-phosphate biosynthesis; D-glycero-alpha-D-manno-heptose 7-phosphate and D-glycero-beta-D-manno-heptose 7-phosphate from sedoheptulose 7-phosphate: step 1/1. Catalyzes the isomerization of sedoheptulose 7-phosphate in D-glycero-D-manno-heptose 7-phosphate. The chain is Phosphoheptose isomerase from Haemophilus influenzae (strain PittGG).